The sequence spans 534 residues: CTP synthase (534 aa).

An amidoligase domain region spans residues 1–267; it reads MTKYIFVTGG…DQIVCDHLKL (267 aa). S13 is a CTP binding site. S13 provides a ligand contact to UTP. 14–19 lines the ATP pocket; that stretch reads SIGKGI. L-glutamine is bound at residue Y54. D71 is a binding site for ATP. Residues D71 and E141 each contribute to the Mg(2+) site. CTP-binding positions include 148 to 150, 188 to 193, and K224; these read DIE and KTKPTQ. UTP is bound by residues 188 to 193 and K224; that span reads KTKPTQ. 240–242 contributes to the ATP binding site; the sequence is RDV. Positions 292-534 constitute a Glutamine amidotransferase type-1 domain; the sequence is KIALVGKYVE…FVTAAIKNSN (243 aa). Residue G354 coordinates L-glutamine. C381 functions as the Nucleophile; for glutamine hydrolysis in the catalytic mechanism. L-glutamine contacts are provided by residues 382–385, E405, and R463; that span reads LGMQ. Catalysis depends on residues H508 and E510.

It belongs to the CTP synthase family. In terms of assembly, homotetramer.

It carries out the reaction UTP + L-glutamine + ATP + H2O = CTP + L-glutamate + ADP + phosphate + 2 H(+). The enzyme catalyses L-glutamine + H2O = L-glutamate + NH4(+). The catalysed reaction is UTP + NH4(+) + ATP = CTP + ADP + phosphate + 2 H(+). Its pathway is pyrimidine metabolism; CTP biosynthesis via de novo pathway; CTP from UDP: step 2/2. Allosterically activated by GTP, when glutamine is the substrate; GTP has no effect on the reaction when ammonia is the substrate. The allosteric effector GTP functions by stabilizing the protein conformation that binds the tetrahedral intermediate(s) formed during glutamine hydrolysis. Inhibited by the product CTP, via allosteric rather than competitive inhibition. In terms of biological role, catalyzes the ATP-dependent amination of UTP to CTP with either L-glutamine or ammonia as the source of nitrogen. Regulates intracellular CTP levels through interactions with the four ribonucleotide triphosphates. The polypeptide is CTP synthase (Streptococcus pyogenes serotype M4 (strain MGAS10750)).